A 451-amino-acid polypeptide reads, in one-letter code: ATP synthase subunit beta (451 aa).

143–150 (GGAGVGKT) is a binding site for ATP.

Belongs to the ATPase alpha/beta chains family. In terms of assembly, F-type ATPases have 2 components, CF(1) - the catalytic core - and CF(0) - the membrane proton channel. CF(1) has five subunits: alpha(3), beta(3), gamma(1), delta(1), epsilon(1). CF(0) has three main subunits: a(1), b(2) and c(9-12). The alpha and beta chains form an alternating ring which encloses part of the gamma chain. CF(1) is attached to CF(0) by a central stalk formed by the gamma and epsilon chains, while a peripheral stalk is formed by the delta and b chains.

The protein localises to the cell membrane. The catalysed reaction is ATP + H2O + 4 H(+)(in) = ADP + phosphate + 5 H(+)(out). Functionally, produces ATP from ADP in the presence of a proton gradient across the membrane. The catalytic sites are hosted primarily by the beta subunits. In Coprothermobacter proteolyticus (strain ATCC 35245 / DSM 5265 / OCM 4 / BT), this protein is ATP synthase subunit beta.